Here is a 210-residue protein sequence, read N- to C-terminus: Ribosomal RNA small subunit methyltransferase G (210 aa).

Residues glycine 76, methionine 81, 127-128 (VE), and arginine 145 contribute to the S-adenosyl-L-methionine site.

It belongs to the methyltransferase superfamily. RNA methyltransferase RsmG family.

The protein resides in the cytoplasm. It catalyses the reaction guanosine(527) in 16S rRNA + S-adenosyl-L-methionine = N(7)-methylguanosine(527) in 16S rRNA + S-adenosyl-L-homocysteine. Its function is as follows. Specifically methylates the N7 position of guanine in position 527 of 16S rRNA. This is Ribosomal RNA small subunit methyltransferase G from Acinetobacter baumannii (strain SDF).